Reading from the N-terminus, the 249-residue chain is Hydantoin racemase (249 aa).

The protein belongs to the HyuE racemase family. As to quaternary structure, homohexamer.

The catalysed reaction is a D-5-monosubstituted hydantoin = a L-5-monosubstituted hydantoin. It catalyses the reaction D-5-[2-(methylsulfanyl)ethyl]hydantoin = L-5-[2-(methysulfanyl)ethyl]hydantoin. It carries out the reaction D-5-benzylhydantoin = L-5-benzylhydantoin. The enzyme catalyses D-5-isopropylhydantoin = L-5-isopropylhydantoin. The catalysed reaction is D-5-isobutylhydantoin = L-5-isobutylhydantoin. With respect to regulation, strongly inhibited by Cu(2+) and Zn(2+). Slightly stimulated by the addition of Mn(2+) or Co(2+), but also by metal-chelating agents such as EDTA or EGTA, indicating that the enzyme is not a metalloenzyme. Involved in the asymmetric conversion of racemic 5-substituted hydantoins to the corresponding L-amino acids. Catalyzes the racemization via enolization of D- and L-5-monosubstituted hydantoins. Is able to racemize 5-substituted hydantoins having aromatic or aliphatic substituents such as 5-(2-methylthioethyl)hydantoin, 5-isopropylhydantoin, 5-isobutylhydantoin and 5-benzylhydantoin. In Pseudomonas sp. (strain NS671), this protein is Hydantoin racemase.